We begin with the raw amino-acid sequence, 429 residues long: Cytochrome P450 BJ-3 (429 aa).

Cys-376 is a binding site for heme.

This sequence belongs to the cytochrome P450 family. Requires heme as cofactor.

In terms of biological role, cytochromes P450 are a group of heme-thiolate monooxygenases. They oxidize a variety of structurally unrelated compounds, including steroids, fatty acids, and xenobiotics. This chain is Cytochrome P450 BJ-3 (cyp114), found in Bradyrhizobium diazoefficiens (strain JCM 10833 / BCRC 13528 / IAM 13628 / NBRC 14792 / USDA 110).